The primary structure comprises 323 residues: Serine racemase (323 aa).

Residues Ser32, Ser33, and Lys52 each coordinate ATP. Catalysis depends on Lys57, which acts as the Proton acceptor. At Lys57 the chain carries Lysino-D-alanine (Lys); alternate. N6-(pyridoxal phosphate)lysine; alternate is present on Lys57. Thr79 lines the Ca(2+) pocket. The active-site Proton acceptor is the Ser82. Residue Asn84 participates in pyridoxal 5'-phosphate binding. 2 residues coordinate ATP: Gln87 and Tyr119. Mg(2+) is bound at residue Asp176. Pyridoxal 5'-phosphate-binding residues include Gly183, Gly184, Gly185, Gly186, and Leu187. Positions 208, 212, and 214 each coordinate Ca(2+). Residues Glu208, Gly212, and Asp214 each contribute to the Mg(2+) site. The Mn(2+) site is built by Glu208, Gly212, and Asp214. Lys277 lines the ATP pocket. Ser308 contributes to the pyridoxal 5'-phosphate binding site. Asn311 contributes to the ATP binding site.

The protein belongs to the serine/threonine dehydratase family. In terms of assembly, homodimer. It depends on Mg(2+) as a cofactor. Mn(2+) is required as a cofactor. Requires Ca(2+) as cofactor. The cofactor is pyridoxal 5'-phosphate. In terms of processing, modification of the active site Lys by its substrate Ser to lysino-D-alanine reduces but does not abolish enzyme activity.

It carries out the reaction L-serine = D-serine. The catalysed reaction is L-serine = pyruvate + NH4(+). The enzyme catalyses D-serine = pyruvate + NH4(+). Allosterically activated by ATP, by magnesium, and possibly also by other divalent metal cations. Its function is as follows. Catalyzes the synthesis of D-serine from L-serine. Has dehydratase activity towards both L-serine and D-serine. The sequence is that of Serine racemase from Schizosaccharomyces pombe (strain 972 / ATCC 24843) (Fission yeast).